We begin with the raw amino-acid sequence, 498 residues long: Glycerol kinase (498 aa).

Thr-12 contacts ADP. ATP contacts are provided by Thr-12, Thr-13, and Ser-14. Residue Thr-12 coordinates sn-glycerol 3-phosphate. Position 16 (Arg-16) interacts with ADP. Residues Arg-82, Glu-83, Tyr-134, and Asp-243 each coordinate sn-glycerol 3-phosphate. Positions 82, 83, 134, 243, and 244 each coordinate glycerol. Positions 265 and 308 each coordinate ADP. Positions 265, 308, 312, and 412 each coordinate ATP. Position 412 (Gly-412) interacts with ADP.

This sequence belongs to the FGGY kinase family.

It catalyses the reaction glycerol + ATP = sn-glycerol 3-phosphate + ADP + H(+). It functions in the pathway polyol metabolism; glycerol degradation via glycerol kinase pathway; sn-glycerol 3-phosphate from glycerol: step 1/1. Its activity is regulated as follows. Inhibited by fructose 1,6-bisphosphate (FBP). Key enzyme in the regulation of glycerol uptake and metabolism. Catalyzes the phosphorylation of glycerol to yield sn-glycerol 3-phosphate. This is Glycerol kinase from Rhizobium rhizogenes (strain K84 / ATCC BAA-868) (Agrobacterium radiobacter).